The sequence spans 270 residues: uncharacterized protein (270 aa).

Positions 1–22 are cleaved as a signal peptide; sequence MGYIKRMALYMSVFLLIIFIVG. A lipid anchor (N-palmitoyl cysteine) is attached at cysteine 23. The S-diacylglycerol cysteine moiety is linked to residue cysteine 23.

This sequence belongs to the staphylococcal tandem lipoprotein family.

Its subcellular location is the cell membrane. This is an uncharacterized protein from Staphylococcus aureus (strain COL).